The chain runs to 741 residues: Nuclear pore complex protein Nup88 (741 aa).

At A2 the chain carries N-acetylalanine. Phosphoserine occurs at positions 35, 50, 379, 437, 442, and 517. Phosphothreonine is present on T525. S540 carries the phosphoserine modification. Residues E585–L651 are a coiled coil. Residue S698 is modified to Phosphoserine.

As to quaternary structure, interacts with NUP214/CAN. Interacts with NUP62 and NUP98. As to expression, ubiquitous.

The protein localises to the nucleus. It localises to the nuclear pore complex. Functionally, component of nuclear pore complex. The sequence is that of Nuclear pore complex protein Nup88 (NUP88) from Homo sapiens (Human).